The chain runs to 833 residues: Leucine--tRNA ligase (833 aa).

Residues 41–52 (PYPSGAGLHVGH) carry the 'HIGH' region motif. The short motif at 610–614 (KMSKS) is the 'KMSKS' region element. Lysine 613 is a binding site for ATP.

This sequence belongs to the class-I aminoacyl-tRNA synthetase family.

It localises to the cytoplasm. It carries out the reaction tRNA(Leu) + L-leucine + ATP = L-leucyl-tRNA(Leu) + AMP + diphosphate. In Streptococcus agalactiae serotype III (strain NEM316), this protein is Leucine--tRNA ligase.